Reading from the N-terminus, the 185-residue chain is Large ribosomal subunit protein uL5 (185 aa).

Belongs to the universal ribosomal protein uL5 family. Part of the 50S ribosomal subunit; part of the 5S rRNA/L5/L18/L25 subcomplex. Contacts the 5S rRNA and the P site tRNA. Forms a bridge to the 30S subunit in the 70S ribosome.

In terms of biological role, this is one of the proteins that bind and probably mediate the attachment of the 5S RNA into the large ribosomal subunit, where it forms part of the central protuberance. In the 70S ribosome it contacts protein S13 of the 30S subunit (bridge B1b), connecting the 2 subunits; this bridge is implicated in subunit movement. Contacts the P site tRNA; the 5S rRNA and some of its associated proteins might help stabilize positioning of ribosome-bound tRNAs. In Bartonella quintana (strain Toulouse) (Rochalimaea quintana), this protein is Large ribosomal subunit protein uL5.